Reading from the N-terminus, the 621-residue chain is Chaperone protein HscA homolog (621 aa).

It belongs to the heat shock protein 70 family.

In terms of biological role, chaperone involved in the maturation of iron-sulfur cluster-containing proteins. Has a low intrinsic ATPase activity which is markedly stimulated by HscB. This Cupriavidus necator (strain ATCC 17699 / DSM 428 / KCTC 22496 / NCIMB 10442 / H16 / Stanier 337) (Ralstonia eutropha) protein is Chaperone protein HscA homolog.